A 147-amino-acid polypeptide reads, in one-letter code: Arginine repressor (147 aa).

Belongs to the ArgR family.

Its subcellular location is the cytoplasm. It functions in the pathway amino-acid biosynthesis; L-arginine biosynthesis [regulation]. Functionally, regulates arginine biosynthesis genes. In Chlamydia felis (strain Fe/C-56) (Chlamydophila felis), this protein is Arginine repressor.